The chain runs to 489 residues: N-succinylglutamate 5-semialdehyde dehydrogenase 1 (489 aa).

NAD(+) is bound at residue 223–228 (GSSRTG). Residues Glu246 and Cys280 contribute to the active site.

It belongs to the aldehyde dehydrogenase family. AstD subfamily.

The catalysed reaction is N-succinyl-L-glutamate 5-semialdehyde + NAD(+) + H2O = N-succinyl-L-glutamate + NADH + 2 H(+). Its pathway is amino-acid degradation; L-arginine degradation via AST pathway; L-glutamate and succinate from L-arginine: step 4/5. Its function is as follows. Catalyzes the NAD-dependent reduction of succinylglutamate semialdehyde into succinylglutamate. The sequence is that of N-succinylglutamate 5-semialdehyde dehydrogenase 1 from Pseudoalteromonas translucida (strain TAC 125).